The chain runs to 289 residues: Glycerol facilitator-aquaporin gla (289 aa).

The next 2 helical transmembrane spans lie at 10 to 30 and 41 to 61; these read ITEF…VANV and SWMI…VAFG. Positions 68 to 70 match the NPA 1 motif; sequence NPA. Transmembrane regions (helical) follow at residues 87 to 107, 151 to 171, and 209 to 229; these read AQYI…IVMV, FLGS…FFGS, and MIAH…LGGP. An NPA 2 motif is present at residues 235 to 237; that stretch reads NPA. A helical membrane pass occupies residues 264–284; that stretch reads WYAWVPVLAPILASLAAVALF.

It belongs to the MIP/aquaporin (TC 1.A.8) family.

It is found in the cell membrane. Its function is as follows. Mixed channel protein that transports both water and glycerol. This Lactococcus lactis subsp. cremoris (Streptococcus cremoris) protein is Glycerol facilitator-aquaporin gla (gla).